The sequence spans 52 residues: UPF0391 membrane protein ABAYE0050 (52 aa).

2 helical membrane-spanning segments follow: residues 6 to 26 and 30 to 50; these read IIFA…VAGL and FAVI…ISRG.

It belongs to the UPF0391 family.

Its subcellular location is the cell membrane. This Acinetobacter baumannii (strain AYE) protein is UPF0391 membrane protein ABAYE0050.